The primary structure comprises 118 residues: uncharacterized protein (118 aa).

A helical membrane pass occupies residues 7-27 (LLTGLFVGGIIGGAAVLLTAP). A coiled-coil region spans residues 31–118 (KQLREKMKTN…IRQLEKTLQN (88 aa)).

It is found in the cell membrane. This is an uncharacterized protein from Bacillus subtilis (strain 168).